The primary structure comprises 407 residues: Tyrosine--tRNA ligase 1 (407 aa).

Tyr-35 serves as a coordination point for L-tyrosine. Positions 40–49 (PTGDSLHVGH) match the 'HIGH' region motif. 2 residues coordinate L-tyrosine: Tyr-168 and Gln-172. The 'KMSKS' region signature appears at 228–232 (KMGKT). Residue Lys-231 coordinates ATP. One can recognise an S4 RNA-binding domain in the interval 340-406 (SSILDVLVHT…GKKKYYKIVI (67 aa)).

It belongs to the class-I aminoacyl-tRNA synthetase family. TyrS type 1 subfamily. In terms of assembly, homodimer.

It localises to the cytoplasm. The enzyme catalyses tRNA(Tyr) + L-tyrosine + ATP = L-tyrosyl-tRNA(Tyr) + AMP + diphosphate + H(+). In terms of biological role, catalyzes the attachment of tyrosine to tRNA(Tyr) in a two-step reaction: tyrosine is first activated by ATP to form Tyr-AMP and then transferred to the acceptor end of tRNA(Tyr). This Clostridium acetobutylicum (strain ATCC 824 / DSM 792 / JCM 1419 / IAM 19013 / LMG 5710 / NBRC 13948 / NRRL B-527 / VKM B-1787 / 2291 / W) protein is Tyrosine--tRNA ligase 1.